The sequence spans 185 residues: Protein N-terminal glutamine amidohydrolase (185 aa).

Catalysis depends on residues C14, H62, and D78.

Belongs to the NTAQ1 family. In terms of assembly, monomer.

It catalyses the reaction N-terminal L-glutaminyl-[protein] + H2O = N-terminal L-glutamyl-[protein] + NH4(+). Its function is as follows. Mediates the side-chain deamidation of N-terminal glutamine residues to glutamate, an important step in N-end rule pathway of protein degradation. Conversion of the resulting N-terminal glutamine to glutamate renders the protein susceptible to arginylation, polyubiquitination and degradation as specified by the N-end rule. Does not act on substrates with internal or C-terminal glutamine and does not act on non-glutamine residues in any position. This is Protein N-terminal glutamine amidohydrolase from Caenorhabditis briggsae.